The following is a 970-amino-acid chain: N-alpha-acetyltransferase 25, NatB auxiliary subunit (970 aa).

TPR repeat units follow at residues 11-44, 45-78, 79-112, and 114-146; these read NDRR…HRDL, HCAK…EPTD, DNSL…VPNS, and EYHS…VPKN.

Belongs to the MDM20/NAA25 family. In terms of assembly, component of the N-terminal acetyltransferase B (NatB) complex which is composed of NAA20 and NAA25.

The protein resides in the cytoplasm. Its function is as follows. Non-catalytic subunit of the NatB complex which catalyzes acetylation of the N-terminal methionine residues of peptides beginning with Met-Asp, Met-Glu, Met-Asn and Met-Gln. May play a role in normal cell-cycle progression. The chain is N-alpha-acetyltransferase 25, NatB auxiliary subunit (Naa25) from Rattus norvegicus (Rat).